The following is a 595-amino-acid chain: uncharacterized protein (595 aa).

Residues 1–21 (MSSQLKSTWAPVPSTKPSQPC) are disordered. WD repeat units follow at residues 56 to 95 (EHTAPTTVARFSPSGYYVASGDNQGNVRIWDCAGEDKILK), 100 to 143 (AISG…GEIF), 144 to 184 (GHSS…FNRS), 187 to 226 (VHSKFVYDVRYSPNDERFASAGADGKVYVFDGKTGDQVYE), 229 to 268 (AHKGSIFSISWSPDSSQFVTSSAGYSCKIWDANTGSLIRE), 313 to 352 (GHQRSITAATLSPDATHFYTASYDGTVLSWDIGKQKAFPL), 356 to 393 (SHTNQVMQMIMADDHVITIGMDDTLRVIDIKQGCFAKD), 433 to 472 (KTIYQPSAVASHPLKSEFCVGGEDCCVYIHTLEKGELCEV), 477 to 516 (DSTAPITCLAYSPDGKYLACGDASGKVVLYDANSREVITS), 520 to 559 (FHTGRILGMSWNAKSTHLATASLDTNIHIYSVERPMKYIA), and 564 to 594 (HSLGATQVEWVSENELLSTGSDAAIKVWSVT).

This sequence belongs to the WD repeat AIP1 family.

This is an uncharacterized protein from Schizosaccharomyces pombe (strain 972 / ATCC 24843) (Fission yeast).